A 281-amino-acid polypeptide reads, in one-letter code: Large ribosomal subunit protein uL2 (281 aa).

A disordered region spans residues 223 to 255 (TVRGSVMNPNDHPHGGGEGRAPIGRKSPVTPWG).

Belongs to the universal ribosomal protein uL2 family. Part of the 50S ribosomal subunit. Forms a bridge to the 30S subunit in the 70S ribosome.

Its function is as follows. One of the primary rRNA binding proteins. Required for association of the 30S and 50S subunits to form the 70S ribosome, for tRNA binding and peptide bond formation. It has been suggested to have peptidyltransferase activity; this is somewhat controversial. Makes several contacts with the 16S rRNA in the 70S ribosome. The sequence is that of Large ribosomal subunit protein uL2 from Mycoplasma capricolum subsp. capricolum (strain California kid / ATCC 27343 / NCTC 10154).